A 553-amino-acid polypeptide reads, in one-letter code: HTH-type transcriptional regulator SgrR (553 aa).

Residues 1–117 (MSTARLQQQF…LSQLGRSFRQ (117 aa)) enclose the HTH marR-type domain. The segment at residues 26 to 49 (LQELAEVLCCSRRHVRSLLGSMQQ) is a DNA-binding region (H-T-H motif). A solute-binding region spans residues 163 to 494 (ELEPDLSHHW…EELHQDVELW (332 aa)).

Functionally, activates the small RNA gene sgrS under glucose-phosphate stress conditions as well as yfdZ. Represses its own transcription under both stress and non-stress conditions. Might act as a sensor of the intracellular accumulation of phosphoglucose by binding these molecules in its C-terminal solute-binding domain. This Yersinia enterocolitica serotype O:8 / biotype 1B (strain NCTC 13174 / 8081) protein is HTH-type transcriptional regulator SgrR.